The following is a 42-amino-acid chain: uncharacterized protein (42 aa).

Residues 15–35 (INVCLSFFFLFYFIFVLFFAA) traverse the membrane as a helical segment.

It localises to the membrane. This is an uncharacterized protein from Dictyostelium discoideum (Social amoeba).